A 129-amino-acid chain; its full sequence is Fluoride-specific ion channel FluC 1 (129 aa).

3 helical membrane passes run 43–63, 68–88, and 100–120; these read ASLLLGLVAGAAGAGAPPAWV, VVSLVGTGLCGALSTYSTFSY, and LLAAANVAGSVLAAFGAAALG. Positions 78 and 81 each coordinate Na(+).

Belongs to the fluoride channel Fluc/FEX (TC 1.A.43) family.

Its subcellular location is the cell membrane. The enzyme catalyses fluoride(in) = fluoride(out). Its activity is regulated as follows. Na(+) is not transported, but it plays an essential structural role and its presence is essential for fluoride channel function. Fluoride-specific ion channel. Important for reducing fluoride concentration in the cell, thus reducing its toxicity. The sequence is that of Fluoride-specific ion channel FluC 1 from Frankia casuarinae (strain DSM 45818 / CECT 9043 / HFP020203 / CcI3).